A 250-amino-acid chain; its full sequence is 2,3-bisphosphoglycerate-dependent phosphoglycerate mutase (250 aa).

Substrate is bound by residues 10 to 17 (RHGESQWN), 23 to 24 (TG), R62, 89 to 92 (ERHY), K100, 116 to 117 (RR), and 185 to 186 (GN). The active-site Tele-phosphohistidine intermediate is H11. E89 (proton donor/acceptor) is an active-site residue.

This sequence belongs to the phosphoglycerate mutase family. BPG-dependent PGAM subfamily. In terms of assembly, homodimer.

The enzyme catalyses (2R)-2-phosphoglycerate = (2R)-3-phosphoglycerate. It functions in the pathway carbohydrate degradation; glycolysis; pyruvate from D-glyceraldehyde 3-phosphate: step 3/5. In terms of biological role, catalyzes the interconversion of 2-phosphoglycerate and 3-phosphoglycerate. This is 2,3-bisphosphoglycerate-dependent phosphoglycerate mutase from Salmonella paratyphi A (strain ATCC 9150 / SARB42).